Consider the following 86-residue polypeptide: MAKTHSLSSKILIGLIRVYQVVISPLIGPRCRFTPTCSCYGIEAVKTHGAIKGSWLTLKRILKCHPLNAGGYDPVPPKINNKKEKK.

This sequence belongs to the UPF0161 family.

It is found in the cell inner membrane. Its function is as follows. Could be involved in insertion of integral membrane proteins into the membrane. In Pasteurella multocida (strain Pm70), this protein is Putative membrane protein insertion efficiency factor.